Reading from the N-terminus, the 299-residue chain is ATP phosphoribosyltransferase (299 aa).

This sequence belongs to the ATP phosphoribosyltransferase family. Long subfamily. As to quaternary structure, equilibrium between an active dimeric form, an inactive hexameric form and higher aggregates. Interconversion between the various forms is largely reversible and is influenced by the natural substrates and inhibitors of the enzyme. Mg(2+) serves as cofactor.

The protein localises to the cytoplasm. The catalysed reaction is 1-(5-phospho-beta-D-ribosyl)-ATP + diphosphate = 5-phospho-alpha-D-ribose 1-diphosphate + ATP. It functions in the pathway amino-acid biosynthesis; L-histidine biosynthesis; L-histidine from 5-phospho-alpha-D-ribose 1-diphosphate: step 1/9. Feedback inhibited by histidine. In terms of biological role, catalyzes the condensation of ATP and 5-phosphoribose 1-diphosphate to form N'-(5'-phosphoribosyl)-ATP (PR-ATP). Has a crucial role in the pathway because the rate of histidine biosynthesis seems to be controlled primarily by regulation of HisG enzymatic activity. In Sodalis glossinidius (strain morsitans), this protein is ATP phosphoribosyltransferase.